A 161-amino-acid chain; its full sequence is 2-C-methyl-D-erythritol 2,4-cyclodiphosphate synthase (161 aa).

2 residues coordinate a divalent metal cation: D14 and H16. Residues 14 to 16 (DVH) and 40 to 41 (HS) contribute to the 4-CDP-2-C-methyl-D-erythritol 2-phosphate site. H48 is a binding site for a divalent metal cation. 4-CDP-2-C-methyl-D-erythritol 2-phosphate-binding positions include 62-64 (DLG), F142, and R145.

Belongs to the IspF family. Homotrimer. A divalent metal cation serves as cofactor.

It catalyses the reaction 4-CDP-2-C-methyl-D-erythritol 2-phosphate = 2-C-methyl-D-erythritol 2,4-cyclic diphosphate + CMP. It functions in the pathway isoprenoid biosynthesis; isopentenyl diphosphate biosynthesis via DXP pathway; isopentenyl diphosphate from 1-deoxy-D-xylulose 5-phosphate: step 4/6. In terms of biological role, involved in the biosynthesis of isopentenyl diphosphate (IPP) and dimethylallyl diphosphate (DMAPP), two major building blocks of isoprenoid compounds. Catalyzes the conversion of 4-diphosphocytidyl-2-C-methyl-D-erythritol 2-phosphate (CDP-ME2P) to 2-C-methyl-D-erythritol 2,4-cyclodiphosphate (ME-CPP) with a corresponding release of cytidine 5-monophosphate (CMP). The sequence is that of 2-C-methyl-D-erythritol 2,4-cyclodiphosphate synthase from Acidothermus cellulolyticus (strain ATCC 43068 / DSM 8971 / 11B).